The primary structure comprises 122 residues: Acidic phospholipase A2 4 (122 aa).

Cystine bridges form between C26/C115, C28/C44, C43/C95, C49/C122, C50/C88, C57/C81, and C75/C86. Residues F27, G29, and G31 each coordinate Ca(2+). H47 is an active-site residue. D48 contributes to the Ca(2+) binding site. Residue D89 is part of the active site.

Belongs to the phospholipase A2 family. Group II subfamily. D49 sub-subfamily. It depends on Ca(2+) as a cofactor. In terms of tissue distribution, expressed by the venom gland.

It localises to the secreted. The catalysed reaction is a 1,2-diacyl-sn-glycero-3-phosphocholine + H2O = a 1-acyl-sn-glycero-3-phosphocholine + a fatty acid + H(+). Its function is as follows. Snake venom phospholipase A2 (PLA2) that has high lipolytic activity. PLA2 catalyzes the calcium-dependent hydrolysis of the 2-acyl groups in 3-sn-phosphoglycerides. This chain is Acidic phospholipase A2 4, found in Craspedocephalus gramineus (Bamboo pit viper).